Consider the following 123-residue polypeptide: Probable non-functional immunoglobulin lambda variable 11-55 (123 aa).

The N-terminal stretch at 1-19 (MALTPLLLLLLSHCTGSLS) is a signal peptide. A framework-1 region spans residues 20–44 (RPVLTQPPSLSASPGATARLPCTLS). In terms of domain architecture, Ig-like spans 21-123 (PVLTQPPSLS…YCQVYESSAN (103 aa)). A disulfide bond links cysteine 41 and cysteine 115. A complementarity-determining-1 region spans residues 45–53 (SDLSVGGKN). The interval 54 to 70 (MFWYQQKLGSSPRLFLY) is framework-2. A complementarity-determining-2 region spans residues 71–77 (HYSDSDK). The framework-3 stretch occupies residues 78–115 (QLGPGVPSRVSGSKETSSNTAFLLISGLQPEDEADYYC). Positions 116–123 (QVYESSAN) are complementarity-determining-3.

Immunoglobulins are composed of two identical heavy chains and two identical light chains; disulfide-linked.

It localises to the secreted. It is found in the cell membrane. Its function is as follows. Probable non-functional open reading frame (ORF) of V region of the variable domain of immunoglobulin light chains. Non-functional ORF generally cannot participate in the synthesis of a productive immunoglobulin chain due to altered V-(D)-J or switch recombination and/or splicing site (at mRNA level) and/or conserved amino acid change (protein level). Immunoglobulins, also known as antibodies, are membrane-bound or secreted glycoproteins produced by B lymphocytes. In the recognition phase of humoral immunity, the membrane-bound immunoglobulins serve as receptors which, upon binding of a specific antigen, trigger the clonal expansion and differentiation of B lymphocytes into immunoglobulins-secreting plasma cells. Secreted immunoglobulins mediate the effector phase of humoral immunity, which results in the elimination of bound antigens. The antigen binding site is formed by the variable domain of one heavy chain, together with that of its associated light chain. Thus, each immunoglobulin has two antigen binding sites with remarkable affinity for a particular antigen. The variable domains are assembled by a process called V-(D)-J rearrangement and can then be subjected to somatic hypermutations which, after exposure to antigen and selection, allow affinity maturation for a particular antigen. This chain is Probable non-functional immunoglobulin lambda variable 11-55, found in Homo sapiens (Human).